A 474-amino-acid chain; its full sequence is tRNA-2-methylthio-N(6)-dimethylallyladenosine synthase (474 aa).

In terms of domain architecture, MTTase N-terminal spans 3–120 (KKLLIKTWGC…LPEMIRQSQS (118 aa)). [4Fe-4S] cluster-binding residues include C12, C49, C83, C157, C161, and C164. The 233-residue stretch at 143-375 (KAEGATAFVS…QQQVNSQAMR (233 aa)) folds into the Radical SAM core domain. The region spanning 378 to 441 (RLMLDTEQRV…ANSLRGELVR (64 aa)) is the TRAM domain.

The protein belongs to the methylthiotransferase family. MiaB subfamily. As to quaternary structure, monomer. [4Fe-4S] cluster is required as a cofactor.

It localises to the cytoplasm. It carries out the reaction N(6)-dimethylallyladenosine(37) in tRNA + (sulfur carrier)-SH + AH2 + 2 S-adenosyl-L-methionine = 2-methylsulfanyl-N(6)-dimethylallyladenosine(37) in tRNA + (sulfur carrier)-H + 5'-deoxyadenosine + L-methionine + A + S-adenosyl-L-homocysteine + 2 H(+). Its function is as follows. Catalyzes the methylthiolation of N6-(dimethylallyl)adenosine (i(6)A), leading to the formation of 2-methylthio-N6-(dimethylallyl)adenosine (ms(2)i(6)A) at position 37 in tRNAs that read codons beginning with uridine. The sequence is that of tRNA-2-methylthio-N(6)-dimethylallyladenosine synthase from Aliivibrio fischeri (strain ATCC 700601 / ES114) (Vibrio fischeri).